Reading from the N-terminus, the 83-residue chain is Protein kreg-1 (83 aa).

The tract at residues 62 to 83 (GHHHHHHGHHFGHHHHHHHGHH) is disordered.

As to expression, weakly expressed in the intestine, but expression is up-regulated in response to Cu(2+).

Its function is as follows. Plays a role in the stress response to heavy metals such as copper, probably in a fos-1/kgb-1-dependent manner. In Caenorhabditis elegans, this protein is Protein kreg-1.